Consider the following 419-residue polypeptide: Tyrosine--tRNA ligase (419 aa).

Residue Y34 participates in L-tyrosine binding. The 'HIGH' region motif lies at 39 to 48 (PSGDSMHIGH). Residues Y168 and Q172 each contribute to the L-tyrosine site. A 'KMSKS' region motif is present at residues 230–234 (KFGKS). K233 provides a ligand contact to ATP. The region spanning 352 to 418 (ANLVDWLVTL…GKKKYFLVSY (67 aa)) is the S4 RNA-binding domain.

Belongs to the class-I aminoacyl-tRNA synthetase family. TyrS type 1 subfamily. Homodimer.

It localises to the cytoplasm. It carries out the reaction tRNA(Tyr) + L-tyrosine + ATP = L-tyrosyl-tRNA(Tyr) + AMP + diphosphate + H(+). In terms of biological role, catalyzes the attachment of tyrosine to tRNA(Tyr) in a two-step reaction: tyrosine is first activated by ATP to form Tyr-AMP and then transferred to the acceptor end of tRNA(Tyr). This chain is Tyrosine--tRNA ligase, found in Listeria monocytogenes serotype 4a (strain HCC23).